Reading from the N-terminus, the 412-residue chain is Multifunctional CCA protein (412 aa).

The ATP site is built by G8 and R11. CTP-binding residues include G8 and R11. Positions 21 and 23 each coordinate Mg(2+). ATP is bound by residues R91, R137, and R140. 3 residues coordinate CTP: R91, R137, and R140. The HD domain maps to 228-329 (TGIHTLMTLS…VKLFDSIDAW (102 aa)).

This sequence belongs to the tRNA nucleotidyltransferase/poly(A) polymerase family. Bacterial CCA-adding enzyme type 1 subfamily. Monomer. Can also form homodimers and oligomers. Mg(2+) serves as cofactor. It depends on Ni(2+) as a cofactor.

It catalyses the reaction a tRNA precursor + 2 CTP + ATP = a tRNA with a 3' CCA end + 3 diphosphate. It carries out the reaction a tRNA with a 3' CCA end + 2 CTP + ATP = a tRNA with a 3' CCACCA end + 3 diphosphate. Functionally, catalyzes the addition and repair of the essential 3'-terminal CCA sequence in tRNAs without using a nucleic acid template. Adds these three nucleotides in the order of C, C, and A to the tRNA nucleotide-73, using CTP and ATP as substrates and producing inorganic pyrophosphate. tRNA 3'-terminal CCA addition is required both for tRNA processing and repair. Also involved in tRNA surveillance by mediating tandem CCA addition to generate a CCACCA at the 3' terminus of unstable tRNAs. While stable tRNAs receive only 3'-terminal CCA, unstable tRNAs are marked with CCACCA and rapidly degraded. The sequence is that of Multifunctional CCA protein from Shigella flexneri.